Reading from the N-terminus, the 317-residue chain is WSCD family member AAEL009094 (317 aa).

A helical membrane pass occupies residues 8 to 28; that stretch reads LFGLAGTILVYIGGILFLSFV. Asn-150, Asn-226, and Asn-232 each carry an N-linked (GlcNAc...) asparagine glycan.

The protein belongs to the WSCD family.

The protein localises to the membrane. The chain is WSCD family member AAEL009094 from Aedes aegypti (Yellowfever mosquito).